The primary structure comprises 411 residues: Bifunctional protein GlmU (411 aa).

The pyrophosphorylase stretch occupies residues 1–204; the sequence is MDAIILCAGK…IGKLHGVELN (204 aa). UTP is bound by residues 6-9, Q74, and G79; that span reads LCAG. N-acetyl-alpha-D-glucosamine 1-phosphate-binding residues include T80, G130, N142, and N158. The segment at 205–224 is linker; the sequence is GYWNDIGHPWDVLSANSHFL. The interval 225-411 is N-acetyltransferase; it reads NKIISKISGK…DELVITKKRN (187 aa). H308 functions as the Proton acceptor in the catalytic mechanism. 2 residues coordinate acetyl-CoA: A384 and K401.

In the N-terminal section; belongs to the N-acetylglucosamine-1-phosphate uridyltransferase family. This sequence in the C-terminal section; belongs to the transferase hexapeptide repeat family.

The enzyme catalyses N-acetyl-alpha-D-glucosamine 1-phosphate + UTP + H(+) = UDP-N-acetyl-alpha-D-glucosamine + diphosphate. The catalysed reaction is alpha-D-glucosamine 1-phosphate + acetyl-CoA = N-acetyl-alpha-D-glucosamine 1-phosphate + CoA + H(+). It functions in the pathway nucleotide-sugar biosynthesis; UDP-N-acetyl-alpha-D-glucosamine biosynthesis; N-acetyl-alpha-D-glucosamine 1-phosphate from alpha-D-glucosamine 6-phosphate (route II): step 2/2. The protein operates within nucleotide-sugar biosynthesis; UDP-N-acetyl-alpha-D-glucosamine biosynthesis; UDP-N-acetyl-alpha-D-glucosamine from N-acetyl-alpha-D-glucosamine 1-phosphate: step 1/1. Catalyzes the last two sequential reactions in the de novo biosynthetic pathway for UDP-N-acetyl-glucosamine (UDP-GlcNAc). Responsible for the acetylation of GlcN-1-P to GlcNAc-1-P, and for the uridyl transfer from UTP to GlcNAc-1-P, to produce UDP-GlcNAc and pyrophosphate. This is Bifunctional protein GlmU from Methanococcus maripaludis (strain C5 / ATCC BAA-1333).